We begin with the raw amino-acid sequence, 937 residues long: uncharacterized protein (937 aa).

Thr2 carries the post-translational modification N-acetylthreonine. The segment at 281-937 (NESPSSNINT…KKGKGKGGRK (657 aa)) is disordered. A compositionally biased stretch (low complexity) spans 290-308 (TTTTSTTTTTTTTTSSPVV). The Charge relay system role is filled by Thr292. Basic and acidic residues-rich tracts occupy residues 309–402 (EESK…EKQQ), 411–431 (AEKE…RLEA), 469–489 (AEKE…KLEA), 512–532 (AEKE…KLEA), 600–615 (AEKE…KLEA), 667–687 (AEKE…KLEA), 738–758 (AEKE…RLEA), and 780–872 (AEKE…KVEE). Positions 345–802 (VDDSKEKEEK…KAAEETKVEE (458 aa)) form a coiled coil. The segment covering 887–897 (EETEEGEEVDE) has biased composition (acidic residues). Residues 898 to 924 (ASNTTTEQTTTNANQPKKPNNNNNNNK) are compositionally biased toward low complexity. Positions 925–937 (GKGKKGKGKGGRK) are enriched in basic residues.

Belongs to the AB hydrolase superfamily.

This is an uncharacterized protein from Dictyostelium discoideum (Social amoeba).